Reading from the N-terminus, the 468-residue chain is Hydroxymethylglutaryl-CoA synthase B (468 aa).

Residue E85 is the Proton donor/acceptor of the active site. C119 acts as the Acyl-thioester intermediate in catalysis. (3S)-3-hydroxy-3-methylglutaryl-CoA contacts are provided by C119, T161, S211, H250, K259, N327, and S359. H250 serves as the catalytic Proton donor/acceptor.

Belongs to the thiolase-like superfamily. HMG-CoA synthase family.

The catalysed reaction is acetoacetyl-CoA + acetyl-CoA + H2O = (3S)-3-hydroxy-3-methylglutaryl-CoA + CoA + H(+). The protein operates within metabolic intermediate biosynthesis; (R)-mevalonate biosynthesis; (R)-mevalonate from acetyl-CoA: step 2/3. Its function is as follows. Condenses acetyl-CoA with acetoacetyl-CoA to form HMG-CoA, which is the substrate for HMG-CoA reductase. The protein is Hydroxymethylglutaryl-CoA synthase B (hgsB) of Dictyostelium discoideum (Social amoeba).